A 181-amino-acid polypeptide reads, in one-letter code: Adenylate kinase (181 aa).

7–15 (GVAGVGKTT) contacts ATP.

Belongs to the archaeal adenylate kinase family.

It localises to the cytoplasm. The enzyme catalyses AMP + ATP = 2 ADP. This Thermoplasma volcanium (strain ATCC 51530 / DSM 4299 / JCM 9571 / NBRC 15438 / GSS1) protein is Adenylate kinase (adkA).